A 270-amino-acid chain; its full sequence is MLKGLYTATSAMIAQQRRTEMLSNNIANANTSGYKADQGSMRAFPEMLLSRIESKSPAGTSRTEIGSVNTGVYMQELKPLFTQGSLKSTDQPTDIALIENQVPMSAETNEKAALFYPVQTADGIRYSKSSTFSLNENNQLTINGRPILSTDRQPITVDNENFTVSENGTVTTNGRTAGQIDVRMAEDVRNLKRDGNDLYSTADGNDLPSAAGNNQVAYSLKQGVSELSNVDVTSAYTEMTEAYRSFEANQKVIQAYDKSMDKAANEIGKI.

This sequence belongs to the flagella basal body rod proteins family.

Not required for motility. The chain is Flagellar hook-basal body complex protein FlhO (flhO) from Bacillus subtilis (strain 168).